Consider the following 185-residue polypeptide: ATP synthase subunit b (185 aa).

Residues 27 to 47 (GALIWKGLNILAFLGIVYYFG) form a helical membrane-spanning segment.

The protein belongs to the ATPase B chain family. In terms of assembly, F-type ATPases have 2 components, F(1) - the catalytic core - and F(0) - the membrane proton channel. F(1) has five subunits: alpha(3), beta(3), gamma(1), delta(1), epsilon(1). F(0) has three main subunits: a(1), b(2) and c(10-14). The alpha and beta chains form an alternating ring which encloses part of the gamma chain. F(1) is attached to F(0) by a central stalk formed by the gamma and epsilon chains, while a peripheral stalk is formed by the delta and b chains.

It is found in the cell inner membrane. F(1)F(0) ATP synthase produces ATP from ADP in the presence of a proton or sodium gradient. F-type ATPases consist of two structural domains, F(1) containing the extramembraneous catalytic core and F(0) containing the membrane proton channel, linked together by a central stalk and a peripheral stalk. During catalysis, ATP synthesis in the catalytic domain of F(1) is coupled via a rotary mechanism of the central stalk subunits to proton translocation. In terms of biological role, component of the F(0) channel, it forms part of the peripheral stalk, linking F(1) to F(0). The polypeptide is ATP synthase subunit b (Aquifex aeolicus (strain VF5)).